Consider the following 1255-residue polypeptide: Period circadian protein homolog 2 (1255 aa).

Residues 1–79 form a disordered region; the sequence is MNGYAEFPPS…EPPDARQSPD (79 aa). Polar residues predominate over residues 35 to 56; that stretch reads SSGSSGHETNENCSTGRDSQGS. Residues 111-120 carry the Nuclear export signal 1 motif; it reads LIKTLKELKV. One can recognise a PAS 1 domain in the interval 181-248; the sequence is VTSEHIVKNA…FHSFTSPYKL (68 aa). Residues 308–312 carry the LXXLL motif; that stretch reads LCCLL. One can recognise a PAS 2 domain in the interval 321–387; the sequence is YEAPRIPPEK…MLAIHKKILQ (67 aa). A PAC domain is found at 395 to 438; that stretch reads YSPIRFRARNGEYITLDTSWSSFINPWSRKISFIIGRHKVRVGP. The short motif at 462–471 is the Nuclear export signal 2 element; the sequence is LTEQIHRLLL. Disordered regions lie at residues 473–557 and 617–646; these read PVPH…AVPA and RSSDKRKATVSPGPHAGEAEPPSRVNSRTG. The interval 480–484 is important for protein stability; sequence SGYGS. The segment covering 504 to 516 has biased composition (basic and acidic residues); it reads NGHEDSRRRRAEI. Residues 512–717 form a CSNK1E binding domain region; the sequence is RRAEICKNGN…ALACGLSQEK (206 aa). Phosphoserine occurs at positions 527, 530, 533, and 540. Residues 529 to 541 show a composition bias toward basic and acidic residues; that stretch reads YSHESGEQKKKSV. Serine 662, serine 696, serine 700, serine 714, serine 766, and serine 771 each carry phosphoserine. Disordered regions lie at residues 764–838 and 931–985; these read ERSK…DTSQ and FPSH…QSRS. Residues 789–805 carry the Nuclear localization signal motif; it reads KKTGKNRKLKSKRVKPR. Positions 790–803 are enriched in basic residues; it reads KTGKNRKLKSKRVK. Composition is skewed to polar residues over residues 829 to 838 and 936 to 956; these read TAWSPSDTSQ and TLTSEMASASQPEFPSRTSIP. The tract at residues 888-1071 is interaction with PPARG; the sequence is QFAVQPPPFP…NEDLCSASGS (184 aa). Serine 945 is modified (phosphoserine). Positions 959 to 972 are enriched in low complexity; that stretch reads PCACPATRATPPSA. Serine 977 carries the post-translational modification Phosphoserine. Residues 989–996 carry the Nuclear export signal 3 motif; the sequence is LQLNLLQL. The disordered stretch occupies residues 1018–1050; the sequence is VGADCKPGTSRDQQPKAPLTRDEPSDTQNSDAL. The short motif at 1057–1061 is the LXXLL element; it reads LNLLL. The interval 1077–1106 is disordered; that stretch reads LGSGSLGCDASPSGAGSSDTSHTSKYFGSI. Polar residues predominate over residues 1090-1106; it reads GAGSSDTSHTSKYFGSI. A Phosphoserine modification is found at serine 1124. Residues 1155–1255 form a CRY binding domain region; it reads SRNLEAVLKE…PLNHRIEEQT (101 aa). The segment at 1231 to 1255 is disordered; sequence GLSEVSDTKEDENGSPLNHRIEEQT.

As to quaternary structure, homodimer. Component of the circadian core oscillator, which includes the CRY proteins, CLOCK or NPAS2, BMAL1 or BMAL2, CSNK1D and/or CSNK1E, TIMELESS, and the PER proteins. Interacts with CLOCK-BMAL1 (off DNA). Interacts with BMAL2. Interacts directly with PER1 and PER3, and through a C-terminal domain, with CRY1 and CRY2. Interacts (via PAS 2 domain) with TIMELESS. Interacts with NFIL3. Different large complexes have been identified with different repressive functions. The core of PER complexes is composed of at least PER1, PER2, PER3, CRY1, CRY2, CSNK1D and/or CSNK1E. The large PER complex involved in the repression of transcriptional termination is composed of at least PER2, CDK9, DDX5, DHX9, NCBP1 and POLR2A (active). The large PER complex involved in the histone deacetylation is composed of at least HDAC1, PER2, SFPQ and SIN3A. The large PER complex involved in the histone methylation is composed of at least PER2, CBX3, TRIM28, SUV39H1 and/or SUV39H2; CBX3 mediates the formation of the complex. Interacts with SETX; the interaction inhibits termination of circadian target genes. Interacts with the nuclear receptors HNF4A, NR1D1, NR4A2, RORA, PPARA, PPARG and THRA; the interaction with at least PPARG is ligand dependent. Interacts with PML. Interacts (phosphorylated) with BTRC and FBXW11; the interactions trigger proteasomal degradation. Interacts with NONO and SFPQ. Interacts with CAVIN3. Interacts with MAGEL2. Interacts with MAP1LC3B. Interacts with HNF4A. Post-translationally, acetylated. Deacetylated by SIRT1, resulting in decreased protein stability. Deacetylated by SIRT6, preventing its degradation by the proteasome, resulting in increased protein stability. In terms of processing, phosphorylated by CSNK1E and CSNK1D. Phosphorylation results in PER2 protein degradation. May be dephosphorylated by PP1. Ubiquitinated, leading to its proteasomal degradation. Ubiquitination may be inhibited by CRY1. As to expression, widely expressed. Found in heart, brain, placenta, lung, liver, skeleatal muscle, kidney and pancreas. High levels in skeletal muscle and pancreas. Low levels in lung. Isoform 2 is expressed in keratinocytes (at protein level).

Its subcellular location is the nucleus. The protein resides in the cytoplasm. It is found in the perinuclear region. It localises to the nucleolus. Transcriptional repressor which forms a core component of the circadian clock. The circadian clock, an internal time-keeping system, regulates various physiological processes through the generation of approximately 24 hour circadian rhythms in gene expression, which are translated into rhythms in metabolism and behavior. It is derived from the Latin roots 'circa' (about) and 'diem' (day) and acts as an important regulator of a wide array of physiological functions including metabolism, sleep, body temperature, blood pressure, endocrine, immune, cardiovascular, and renal function. Consists of two major components: the central clock, residing in the suprachiasmatic nucleus (SCN) of the brain, and the peripheral clocks that are present in nearly every tissue and organ system. Both the central and peripheral clocks can be reset by environmental cues, also known as Zeitgebers (German for 'timegivers'). The predominant Zeitgeber for the central clock is light, which is sensed by retina and signals directly to the SCN. The central clock entrains the peripheral clocks through neuronal and hormonal signals, body temperature and feeding-related cues, aligning all clocks with the external light/dark cycle. Circadian rhythms allow an organism to achieve temporal homeostasis with its environment at the molecular level by regulating gene expression to create a peak of protein expression once every 24 hours to control when a particular physiological process is most active with respect to the solar day. Transcription and translation of core clock components (CLOCK, NPAS2, BMAL1, BMAL2, PER1, PER2, PER3, CRY1 and CRY2) plays a critical role in rhythm generation, whereas delays imposed by post-translational modifications (PTMs) are important for determining the period (tau) of the rhythms (tau refers to the period of a rhythm and is the length, in time, of one complete cycle). A diurnal rhythm is synchronized with the day/night cycle, while the ultradian and infradian rhythms have a period shorter and longer than 24 hours, respectively. Disruptions in the circadian rhythms contribute to the pathology of cardiovascular diseases, cancer, metabolic syndrome and aging. A transcription/translation feedback loop (TTFL) forms the core of the molecular circadian clock mechanism. Transcription factors, CLOCK or NPAS2 and BMAL1 or BMAL2, form the positive limb of the feedback loop, act in the form of a heterodimer and activate the transcription of core clock genes and clock-controlled genes (involved in key metabolic processes), harboring E-box elements (5'-CACGTG-3') within their promoters. The core clock genes: PER1/2/3 and CRY1/2 which are transcriptional repressors form the negative limb of the feedback loop and interact with the CLOCK|NPAS2-BMAL1|BMAL2 heterodimer inhibiting its activity and thereby negatively regulating their own expression. This heterodimer also activates nuclear receptors NR1D1/2 and RORA/B/G, which form a second feedback loop and which activate and repress BMAL1 transcription, respectively. PER1 and PER2 proteins transport CRY1 and CRY2 into the nucleus with appropriate circadian timing, but also contribute directly to repression of clock-controlled target genes through interaction with several classes of RNA-binding proteins, helicases and others transcriptional repressors. PER appears to regulate circadian control of transcription by at least three different modes. First, interacts directly with the CLOCK-BMAL1 at the tail end of the nascent transcript peak to recruit complexes containing the SIN3-HDAC that remodel chromatin to repress transcription. Second, brings H3K9 methyltransferases such as SUV39H1 and SUV39H2 to the E-box elements of the circadian target genes, like PER2 itself or PER1. The recruitment of each repressive modifier to the DNA seems to be very precisely temporally orchestrated by the large PER complex, the deacetylases acting before than the methyltransferases. Additionally, large PER complexes are also recruited to the target genes 3' termination site through interactions with RNA-binding proteins and helicases that may play a role in transcription termination to regulate transcription independently of CLOCK-BMAL1 interactions. Recruitment of large PER complexes to the elongating polymerase at PER and CRY termination sites inhibited SETX action, impeding RNA polymerase II release and thereby repressing transcriptional reinitiation. May propagate clock information to metabolic pathways via the interaction with nuclear receptors. Coactivator of PPARA and corepressor of NR1D1, binds rhythmically at the promoter of nuclear receptors target genes like BMAL1 or G6PC1. Directly and specifically represses PPARG proadipogenic activity by blocking PPARG recruitment to target promoters and thereby inhibiting transcriptional activation. Required for fatty acid and lipid metabolism, is involved as well in the regulation of circulating insulin levels. Plays an important role in the maintenance of cardiovascular functions through the regulation of NO and vasodilatatory prostaglandins production in aortas. Controls circadian glutamate uptake in synaptic vesicles through the regulation of VGLUT1 expression. May also be involved in the regulation of inflammatory processes. Represses the CLOCK-BMAL1 induced transcription of BHLHE40/DEC1 and ATF4. Negatively regulates the formation of the TIMELESS-CRY1 complex by competing with TIMELESS for binding to CRY1. The chain is Period circadian protein homolog 2 (PER2) from Homo sapiens (Human).